The primary structure comprises 316 residues: UDP-N-acetylenolpyruvoylglucosamine reductase (316 aa).

Residues 30–194 (VGGEADYLVF…LSVKFALAPG (165 aa)) enclose the FAD-binding PCMH-type domain. The active site involves arginine 173. The Proton donor role is filled by serine 223. The active site involves glutamate 293.

It belongs to the MurB family. Requires FAD as cofactor.

It localises to the cytoplasm. It catalyses the reaction UDP-N-acetyl-alpha-D-muramate + NADP(+) = UDP-N-acetyl-3-O-(1-carboxyvinyl)-alpha-D-glucosamine + NADPH + H(+). The protein operates within cell wall biogenesis; peptidoglycan biosynthesis. Cell wall formation. The protein is UDP-N-acetylenolpyruvoylglucosamine reductase of Streptococcus pneumoniae serotype 2 (strain D39 / NCTC 7466).